Here is an 812-residue protein sequence, read N- to C-terminus: MPPSPPRPPKFPGSGRPESPNWGVWVMVLLIVGVLAFGFFTPESFGLGPRKENLESFEAQYKAGRVVLNDPKAPVEVVLSENGSEGVIHALVYRKEIQPKVEMTPFALTYSMSLPDRDKPLLNELSGYRVVESPYRTEEGKNVSLIPEGAQKLSVPEFNRLALEGRIAGGKDGIILAEDGNQNVLVGQIVTRIWPAATGDASVDKQRFERVEVPFTLEFQGDRVKQLLGPDTKFKRESGSWGGILLNLLPIVLILVILFFMFRAQSGGARGAMSFGKSRARLISPDKNKVTFKDVAGISEAKEEVWELVEFLRNPEKFRDLGATIPRGVLMVGAPGTGKTLLARAIAGESNASFYSISGSDFVEMFVGVGASRVRDMFEQAKRTAPSLIFIDEIDAVGRQRGYGMGGGNDEREQTLNALLVEMDGFENNSNVIVIAATNRADILDPALLRPGRFDRQVVVNLPDVRGREQILQVHARKVKMAPGVSFERIARGTSGFSGAQLANLVNEAALLAARKGLKEITEAELEEARDKVSWGRERRSLAINERGRRITAVHEAGHAICLLKTPHSEPLHRVTIVPRGGALGMTMWLPSDDKMHQLRSEMLDQLVVAMGGRCAEQIVFGDVTSGATGDIKSATNLARRMVCEFGMSEKLGLIEYGEHQGEVYIARDLGTRSRNYSESTAELIDSEVRFLVDSAYERAMAILTENRDKLDILTEALMEFETLEGSQVMDILEYGEMKNPPARVTPPPMPSEVEEQPGKDDSGHNEKKEAEETRADGAEERKMEEELEQAERAPFSYNPVDEFGKDGGEKK.

Residues 1–21 (MPPSPPRPPKFPGSGRPESPN) lie on the Cytoplasmic side of the membrane. A helical membrane pass occupies residues 22–42 (WGVWVMVLLIVGVLAFGFFTP). The Extracellular portion of the chain corresponds to 43–241 (ESFGLGPRKE…TKFKRESGSW (199 aa)). A helical transmembrane segment spans residues 242 to 262 (GGILLNLLPIVLILVILFFMF). The Cytoplasmic segment spans residues 263–812 (RAQSGGARGA…EFGKDGGEKK (550 aa)). ATP is bound at residue 333–340 (GAPGTGKT). Histidine 555 serves as a coordination point for Zn(2+). Residue glutamate 556 is part of the active site. Histidine 559 and aspartate 631 together coordinate Zn(2+). A disordered region spans residues 739 to 812 (KNPPARVTPP…EFGKDGGEKK (74 aa)). 2 stretches are compositionally biased toward basic and acidic residues: residues 757-785 (QPGK…RKME) and 803-812 (EFGKDGGEKK).

This sequence in the central section; belongs to the AAA ATPase family. It in the C-terminal section; belongs to the peptidase M41 family. Homohexamer. It depends on Zn(2+) as a cofactor.

It localises to the cell membrane. Functionally, acts as a processive, ATP-dependent zinc metallopeptidase for both cytoplasmic and membrane proteins. Plays a role in the quality control of integral membrane proteins. In Akkermansia muciniphila (strain ATCC BAA-835 / DSM 22959 / JCM 33894 / BCRC 81048 / CCUG 64013 / CIP 107961 / Muc), this protein is ATP-dependent zinc metalloprotease FtsH.